The chain runs to 343 residues: Heat-inducible transcription repressor HrcA (343 aa).

It belongs to the HrcA family.

Functionally, negative regulator of class I heat shock genes (grpE-dnaK-dnaJ and groELS operons). Prevents heat-shock induction of these operons. In Mycolicibacterium paratuberculosis (strain ATCC BAA-968 / K-10) (Mycobacterium paratuberculosis), this protein is Heat-inducible transcription repressor HrcA.